The following is a 704-amino-acid chain: Cystathionine beta-synthase cbs-1 (704 aa).

Residues asparagine 454, 562-566 (GTGGT), and serine 652 each bind pyridoxal 5'-phosphate.

The protein belongs to the cysteine synthase/cystathionine beta-synthase family. In terms of assembly, monomer. Does not bind pyridoxal 5'-phosphate, PLP; which may explain why this isoform has virtually undetectable catalytic activity. Pyridoxal 5'-phosphate is required as a cofactor.

The protein resides in the cytoplasm. The catalysed reaction is L-homocysteine + L-serine = L,L-cystathionine + H2O. Its pathway is amino-acid biosynthesis; L-cysteine biosynthesis; L-cysteine from L-homocysteine and L-serine: step 1/2. Functionally, hydro-lyase catalyzing the first step of the transsulfuration pathway, where the hydroxyl group of L-serine is displaced by L-homocysteine in a beta-replacement reaction to form L-cystathionine, the precursor of L-cysteine. Plays a role in maintaining homocysteine homeostasis. Involved in cold-induced somatic longevity mediated by prostaglandin E2 (PGE2) signals from adult germ cells, perhaps acting via a role in the production of hydrogen sulfide (H2S). Required for normal development. The chain is Cystathionine beta-synthase cbs-1 from Caenorhabditis elegans.